Here is a 975-residue protein sequence, read N- to C-terminus: Exocyst complex component 4 (975 aa).

N-acetylalanine is present on Ala-2. Lys-9 carries the post-translational modification N6-acetyllysine. Phosphoserine is present on Ser-32. Positions 32-114 (STSDDVEDRE…HCKRDELRKL (83 aa)) form a coiled coil. Positions 211 to 224 (RNKEKGKMSSHGKD) are enriched in basic and acidic residues. The segment at 211–230 (RNKEKGKMSSHGKDPSPGPL) is disordered. Ser-226 is subject to Phosphoserine. A Phosphothreonine modification is found at Thr-238. Position 469 is a phosphoserine (Ser-469).

The protein belongs to the SEC8 family. As to quaternary structure, the exocyst complex is composed of EXOC1, EXOC2, EXOC3, EXOC4, EXOC5, EXOC6, EXOC7 and EXOC8. Interacts with BIRC6/bruce. Interacts with MYRIP. Interacts with SH3BP1; required for the localization of both SH3BP1 and the exocyst to the leading edge of migrating cells. Interacts with SLC6A9. As to expression, expressed in the striatum (at protein level).

Its subcellular location is the midbody. The protein localises to the midbody ring. The protein resides in the cell projection. It is found in the cytoplasm. It localises to the cytoskeleton. Its subcellular location is the microtubule organizing center. The protein localises to the centrosome. Functionally, component of the exocyst complex involved in the docking of exocytic vesicles with fusion sites on the plasma membrane. The chain is Exocyst complex component 4 (Exoc4) from Mus musculus (Mouse).